A 3412-amino-acid chain; its full sequence is Genome polyprotein (3412 aa).

Over 1–104 the chain is Cytoplasmic; that stretch reads MSGRKAQGKT…LSSRKRRSNE (104 aa). The hydrophobic; homodimerization of capsid protein C stretch occupies residues 38-72; sequence PGPSRGVQGFIFFFLFNILTGKKLTAHLKKLWRML. Positions 102–121 are cleaved as a propeptide — ER anchor for the capsid protein C, removed in mature form by serine protease NS3; it reads SNEMALFPLLLLGLLALSGG. The helical transmembrane segment at 105 to 125 threads the bilayer; the sequence is MALFPLLLLGLLALSGGVTLV. Residues 126–244 lie on the Extracellular side of the membrane; sequence RKNRWLLLNV…GERQLQKIER (119 aa). N-linked (GlcNAc...) asparagine; by host glycans are attached at residues asparagine 134 and asparagine 150. The helical transmembrane segment at 245-265 threads the bilayer; it reads WLVRNPFFAVTALAIAYLVGN. The Cytoplasmic segment spans residues 266–270; sequence NTTQR. The chain crosses the membrane as a helical span at residues 271-285; the sequence is VVIALLVLAVGPAYS. Over 286–730 the chain is Extracellular; it reads AHCIGITDRD…TVFGSAFQGL (445 aa). 8 cysteine pairs are disulfide-bonded: cysteine 288–cysteine 315, cysteine 345–cysteine 401, cysteine 345–cysteine 406, cysteine 359–cysteine 390, cysteine 377–cysteine 401, cysteine 377–cysteine 406, cysteine 467–cysteine 568, and cysteine 585–cysteine 615. The interval 383-396 is fusion peptide; sequence DRGWGNGCGLFGKG. Residues 731-751 form a helical membrane-spanning segment; that stretch reads FGGLSWITKVIMGAVLIWVGI. Residues 752–757 lie on the Extracellular side of the membrane; it reads NTRNMT. A helical membrane pass occupies residues 758-778; sequence MSMSMILVGVIMMFLSLGVGA. Topologically, residues 779 to 1132 are extracellular; sequence DQGCAVNFGK…LVRSWVTAGE (354 aa). 6 cysteine pairs are disulfide-bonded: cysteine 782/cysteine 793, cysteine 833/cysteine 921, cysteine 957/cysteine 1002, cysteine 1058/cysteine 1107, cysteine 1069/cysteine 1091, and cysteine 1090/cysteine 1094. 2 N-linked (GlcNAc...) asparagine; by host glycosylation sites follow: asparagine 908 and asparagine 986. A helical membrane pass occupies residues 1133-1153; sequence VHAVPFGLVSMMIAMEVVLRR. Residues 1154-1201 are Cytoplasmic-facing; the sequence is RQGPKQMLVGGVVLLGAMLVGQVTVLDLVKFVVAVGLHFHEINNGGDA. The helical transmembrane segment at 1202 to 1222 threads the bilayer; it reads MYMALIASFSIRPGLLMGFGL. The Lumenal portion of the chain corresponds to 1223 to 1287; sequence RTLWSPRERL…ILPLMALMTP (65 aa). The helical transmembrane segment at 1288–1308 threads the bilayer; sequence MTMHEVRMATMLFCTVVIIGV. Over 1309 to 1355 the chain is Cytoplasmic; sequence LHQNSKDTSMQKTIPIVALTLTSYMGLTQPFLGLCAYMSTQVFGRRS. Residues 1356 to 1376 form a helical membrane-spanning segment; the sequence is IPVNEALAAAGLVGVLAGLAF. Residues 1377 to 1378 lie on the Lumenal side of the membrane; sequence QD. A helical transmembrane segment spans residues 1379–1399; it reads MENFLGPIAVGGILMMLVSVA. Topologically, residues 1400–1456 are cytoplasmic; the sequence is GRVDGLELKKLGEISWEEEAEISGSSSRYDVALSEQGEFKLLSEDKVPWDQIVMTSL. Residues 1407–1446 form an interacts with and activates NS3 protease region; that stretch reads LKKLGEISWEEEAEISGSSSRYDVALSEQGEFKLLSEDKV. An intramembrane region (helical) is located at residues 1457-1477; that stretch reads ALVGAAIHPFALLLVLGGWIL. At 1478–2157 the chain is on the cytoplasmic side; that stretch reads HIKGARRSGD…RNALSMMPEA (680 aa). In terms of domain architecture, Peptidase S7 spans 1485 to 1665; that stretch reads SGDVLWDIPT…ELKEESKEEL (181 aa). Residues histidine 1537, aspartate 1561, and serine 1622 each act as charge relay system; for serine protease NS3 activity in the active site. Residues 1669 to 1825 form the Helicase ATP-binding domain; sequence PTMLKKGMTT…HSNGEIEDVQ (157 aa). Residues 1673 to 1676 form an important for RNA-binding region; that stretch reads KKGM. Residue 1682-1689 coordinates ATP; sequence FHPGAGKT. The short motif at 1773-1776 is the DEAH box element; it reads DEAH. The 162-residue stretch at 1836-1997 folds into the Helicase C-terminal domain; it reads GHEWILADKR…VRGGMVAPLY (162 aa). Residue lysine 1877 is modified to N6-acetyllysine; by host. The segment at 1942–1963 is disordered; it reads AAQRRGRIGRNPNRDGDSYYYS. A helical transmembrane segment spans residues 2158–2178; it reads MTIVMLFLLAGLLTSGAVIFF. Topologically, residues 2179–2186 are lumenal; that stretch reads MSPKGMSR. Positions 2187–2207 form an intramembrane region, helical; sequence MSMAMGTMAGSGYLMFLGGVK. The Lumenal portion of the chain corresponds to 2208-2209; sequence PT. A helical membrane pass occupies residues 2210-2230; that stretch reads HISYVMLIFFVLMVVVIPEPG. At 2231–2241 the chain is on the cytoplasmic side; the sequence is QQRTIQDNQVA. Residues 2242–2262 form a helical membrane-spanning segment; it reads YLIIGILTLLSVVAANELGML. Topologically, residues 2263–2293 are lumenal; that stretch reads EKTKEDFFGKRDITTPSGAIPWSWPDLDLKP. The helical intramembrane region spans 2294–2314; that stretch reads GAAWTVYVGIVTMLSPMLHHW. At 2315–2360 the chain is on the lumenal side; it reads IKVEYGNLSLSGIAQSASVLSFMDKGIPFMKMNISVVILLVSGWNS. A helical membrane pass occupies residues 2361–2380; it reads ITVIPLLCGIGGAMLHWTLI. The Cytoplasmic segment spans residues 2381-2421; that stretch reads LPGIKAQQSKLAQKRVFHGVAKNPVVDGNPTADIEEAPEMP. The helical transmembrane segment at 2422–2442 threads the bilayer; that stretch reads ALYEKKLALYLLLALSLMSVA. Residues 2443–2445 are Lumenal-facing; it reads MCR. A helical membrane pass occupies residues 2446-2466; sequence TPFSLAEGIVLSSAALGPLIE. Over 2467 to 3411 the chain is Cytoplasmic; sequence GNTSLLWNGP…VDADLQPGEL (945 aa). One can recognise an mRNA cap 0-1 NS5-type MT domain in the interval 2508 to 2772; sequence GSASGKTLGE…DVILPIGTRS (265 aa). Serine 2563 is an S-adenosyl-L-methionine binding site. Serine 2563 carries the phosphoserine modification. The For 2'-O-MTase activity role is filled by lysine 2568. S-adenosyl-L-methionine is bound by residues glycine 2593, tryptophan 2594, threonine 2611, leucine 2612, aspartate 2638, and valine 2639. The active-site For 2'-O-MTase activity is the aspartate 2653. An S-adenosyl-L-methionine-binding site is contributed by isoleucine 2654. Residues lysine 2689 and glutamate 2725 each act as for 2'-O-MTase activity in the active site. S-adenosyl-L-methionine is bound at residue tyrosine 2727. Positions 2879–2912 match the Nuclear localization signal motif; that stretch reads RKIMKVVNRWLFRHLSREKNPRLCTKEEFIAKVR. Glutamate 2946, histidine 2950, cysteine 2955, and cysteine 2958 together coordinate Zn(2+). The RdRp catalytic domain occupies 3036–3188; it reads GGFYADDTAG…RPVDDRFGLA (153 aa). The Zn(2+) site is built by histidine 3223, cysteine 3239, and cysteine 3358.

The protein in the N-terminal section; belongs to the class I-like SAM-binding methyltransferase superfamily. mRNA cap 0-1 NS5-type methyltransferase family. As to quaternary structure, homodimer. Interacts (via N-terminus) with host EXOC1 (via C-terminus); this interaction results in EXOC1 degradation through the proteasome degradation pathway. Forms heterodimers with envelope protein E in the endoplasmic reticulum and Golgi. In terms of assembly, homodimer; in the endoplasmic reticulum and Golgi. Interacts with protein prM. Interacts with non-structural protein 1. As to quaternary structure, homodimer; Homohexamer when secreted. Interacts with envelope protein E. Interacts (via N-terminus) with serine protease NS3. In terms of assembly, forms a heterodimer with serine protease NS3. May form homooligomers. As to quaternary structure, forms a heterodimer with NS2B. Interacts with non-structural protein 2A (via N-terminus). Interacts with NS4B. Interacts with unphosphorylated RNA-directed RNA polymerase NS5; this interaction stimulates RNA-directed RNA polymerase NS5 guanylyltransferase activity. NS3 interacts with host PDCD6IP; this interaction contributes to virion release. Interacts with serine protease NS3. In terms of assembly, homodimer. Interacts with host STAT2; this interaction prevents the establishment of cellular antiviral state. Interacts with serine protease NS3. Interacts with host TRIM23; this interaction leads to NS5 ubiquitination. In terms of processing, specific enzymatic cleavages in vivo yield mature proteins. The nascent capsid protein C contains a C-terminal hydrophobic domain that act as a signal sequence for translocation of prM into the lumen of the ER. Mature capsid protein C is cleaved at a site upstream of this hydrophobic domain by NS3. prM is cleaved in post-Golgi vesicles by a host furin, releasing the mature small envelope protein M, and peptide pr. Non-structural protein 2A-alpha, a C-terminally truncated form of non-structural protein 2A, results from partial cleavage by NS3. Specific enzymatic cleavages in vivo yield mature proteins peptide 2K acts as a signal sequence and is removed from the N-terminus of NS4B by the host signal peptidase in the ER lumen. Signal cleavage at the 2K-4B site requires a prior NS3 protease-mediated cleavage at the 4A-2K site. Post-translationally, cleaved in post-Golgi vesicles by a host furin, releasing the mature small envelope protein M, and peptide pr. This cleavage is incomplete as up to 30% of viral particles still carry uncleaved prM. N-glycosylated. In terms of processing, N-glycosylated. The excreted form is glycosylated and this is required for efficient secretion of the protein from infected cells. Post-translationally, polyubiquitinated; ubiquitination is probably mediated by host TRIM23 and is prerequisite for NS5-STAT2 interaction. NS5 is not ISGylated or sumoylated. Acetylated by host KAT5. Acetylation modulates NS3 RNA-binding and unwinding activities and plays an important positive role for viral replication. In terms of processing, phosphorylated on serines residues. This phosphorylation may trigger NS5 nuclear localization.

Its subcellular location is the virion. The protein localises to the host nucleus. It is found in the host cytoplasm. The protein resides in the host perinuclear region. It localises to the secreted. Its subcellular location is the virion membrane. The protein localises to the host endoplasmic reticulum membrane. The catalysed reaction is Selective hydrolysis of -Xaa-Xaa-|-Yaa- bonds in which each of the Xaa can be either Arg or Lys and Yaa can be either Ser or Ala.. It catalyses the reaction RNA(n) + a ribonucleoside 5'-triphosphate = RNA(n+1) + diphosphate. The enzyme catalyses a ribonucleoside 5'-triphosphate + H2O = a ribonucleoside 5'-diphosphate + phosphate + H(+). It carries out the reaction ATP + H2O = ADP + phosphate + H(+). The catalysed reaction is a 5'-end (5'-triphosphoguanosine)-ribonucleoside in mRNA + S-adenosyl-L-methionine = a 5'-end (N(7)-methyl 5'-triphosphoguanosine)-ribonucleoside in mRNA + S-adenosyl-L-homocysteine. It catalyses the reaction a 5'-end (N(7)-methyl 5'-triphosphoguanosine)-ribonucleoside in mRNA + S-adenosyl-L-methionine = a 5'-end (N(7)-methyl 5'-triphosphoguanosine)-(2'-O-methyl-ribonucleoside) in mRNA + S-adenosyl-L-homocysteine + H(+). Its function is as follows. Plays a role in virus budding by binding to the cell membrane and gathering the viral RNA into a nucleocapsid that forms the core of a mature virus particle. During virus entry, may induce genome penetration into the host cytoplasm after hemifusion induced by the surface proteins. Can migrate to the cell nucleus where it modulates host functions. Inhibits RNA silencing by interfering with host Dicer. In terms of biological role, prevents premature fusion activity of envelope proteins in trans-Golgi by binding to envelope protein E at pH6.0. After virion release in extracellular space, gets dissociated from E dimers. Functionally, acts as a chaperone for envelope protein E during intracellular virion assembly by masking and inactivating envelope protein E fusion peptide. prM is the only viral peptide matured by host furin in the trans-Golgi network probably to avoid catastrophic activation of the viral fusion activity in acidic Golgi compartment prior to virion release. prM-E cleavage is inefficient, and many virions are only partially matured. These uncleaved prM would play a role in immune evasion. Its function is as follows. May play a role in virus budding. Exerts cytotoxic effects by activating a mitochondrial apoptotic pathway through M ectodomain. May display a viroporin activity. Binds to host cell surface receptor and mediates fusion between viral and cellular membranes. Envelope protein is synthesized in the endoplasmic reticulum in the form of heterodimer with protein prM. They play a role in virion budding in the ER, and the newly formed immature particle is covered with 60 spikes composed of heterodimer between precursor prM and envelope protein E. The virion is transported to the Golgi apparatus where the low pH causes dissociation of PrM-E heterodimers and formation of E homodimers. prM-E cleavage is inefficient, and many virions are only partially matured. These uncleaved prM would play a role in immune evasion. In terms of biological role, involved in immune evasion, pathogenesis and viral replication. Once cleaved off the polyprotein, is targeted to three destinations: the viral replication cycle, the plasma membrane and the extracellular compartment. Essential for viral replication. Required for formation of the replication complex and recruitment of other non-structural proteins to the ER-derived membrane structures. Excreted as a hexameric lipoparticle that plays a role against host immune response. Antagonizing the complement function. Binds to the host macrophages and dendritic cells. Inhibits signal transduction originating from Toll-like receptor 3 (TLR3). Functionally, component of the viral RNA replication complex that functions in virion assembly and antagonizes the host immune response. Its function is as follows. Required cofactor for the serine protease function of NS3. May have membrane-destabilizing activity and form viroporins. Displays three enzymatic activities: serine protease, NTPase and RNA helicase. NS3 serine protease, in association with NS2B, performs its autocleavage and cleaves the polyprotein at dibasic sites in the cytoplasm: C-prM, NS2A-NS2B, NS2B-NS3, NS3-NS4A, NS4A-2K and NS4B-NS5. NS3 RNA helicase binds RNA and unwinds dsRNA in the 3' to 5' direction. Also plays a role in virus assembly. In terms of biological role, regulates the ATPase activity of the NS3 helicase activity. NS4A allows NS3 helicase to conserve energy during unwinding. Functionally, functions as a signal peptide for NS4B and is required for the interferon antagonism activity of the latter. Its function is as follows. Induces the formation of ER-derived membrane vesicles where the viral replication takes place. Inhibits interferon (IFN)-induced host STAT1 phosphorylation and nuclear translocation, thereby preventing the establishment of cellular antiviral state by blocking the IFN-alpha/beta pathway. Replicates the viral (+) and (-) RNA genome, and performs the capping of genomes in the cytoplasm. NS5 methylates viral RNA cap at guanine N-7 and ribose 2'-O positions. Besides its role in RNA genome replication, also prevents the establishment of cellular antiviral state by blocking the interferon-alpha/beta (IFN-alpha/beta) signaling pathway. IFN-I induces binding of NS5 to host IFN-activated transcription factor STAT2, preventing its transcriptional activity. Host TRIM23 is the E3 ligase that interacts with and polyubiquitinates NS5 to promote its binding to STAT2 and trigger IFN-I signaling inhibition. The chain is Genome polyprotein from Aedes aegypti (Yellowfever mosquito).